A 148-amino-acid polypeptide reads, in one-letter code: UPF0756 membrane protein YeaL (148 aa).

The next 4 helical transmembrane spans lie at 14 to 34 (ALGFISHNTTVAVSILVLIIV), 51 to 71 (LSIGIIILTIGVMAPIASGTL), 86 to 106 (LVAIAVGVIVSWLGGRGVTLM), and 112 to 132 (LVAGLLVGTVLGVALFRGVPV).

This sequence belongs to the UPF0756 family.

It localises to the cell membrane. This is UPF0756 membrane protein YeaL from Escherichia coli O157:H7.